Reading from the N-terminus, the 298-residue chain is Tyrosine recombinase XerC (298 aa).

The 84-residue stretch at 1-84 (MNHIQEAFLN…TLRTFYEYWM (84 aa)) folds into the Core-binding (CB) domain. Residues 105–286 (YLPQFFYEEE…SNQQLRKVYL (182 aa)) form the Tyr recombinase domain. Residues R145, K169, H238, R241, and H264 contribute to the active site. Y273 acts as the O-(3'-phospho-DNA)-tyrosine intermediate in catalysis.

It belongs to the 'phage' integrase family. XerC subfamily. Forms a cyclic heterotetrameric complex composed of two molecules of XerC and two molecules of XerD.

Its subcellular location is the cytoplasm. Its function is as follows. Site-specific tyrosine recombinase, which acts by catalyzing the cutting and rejoining of the recombining DNA molecules. The XerC-XerD complex is essential to convert dimers of the bacterial chromosome into monomers to permit their segregation at cell division. It also contributes to the segregational stability of plasmids. This is Tyrosine recombinase XerC from Staphylococcus aureus (strain bovine RF122 / ET3-1).